A 192-amino-acid chain; its full sequence is Ion-translocating oxidoreductase complex subunit A (192 aa).

The next 6 membrane-spanning stretches (helical) occupy residues 5–25 (LLLL…FLGL), 39–59 (IGMS…SYLV), 65–85 (LPFD…AVVV), 102–122 (ALGI…VALL), 134–154 (AIFG…FSAM), and 171–191 (AIAM…TGLV).

It belongs to the NqrDE/RnfAE family. In terms of assembly, the complex is composed of six subunits: RnfA, RnfB, RnfC, RnfD, RnfE and RnfG.

The protein localises to the cell inner membrane. Its function is as follows. Part of a membrane-bound complex that couples electron transfer with translocation of ions across the membrane. This chain is Ion-translocating oxidoreductase complex subunit A, found in Shewanella piezotolerans (strain WP3 / JCM 13877).